Here is a 467-residue protein sequence, read N- to C-terminus: Methionine aminopeptidase 2-1 (467 aa).

Positions Met1–Arg10 are enriched in basic and acidic residues. A disordered region spans residues Met1 to Ile105. Over residues Asp43–Gly55 the composition is skewed to acidic residues. Over residues Lys75 to Ser90 the composition is skewed to basic residues. His219 lines the substrate pocket. Asp240, Asp251, and His320 together coordinate a divalent metal cation. Residue His328 participates in substrate binding. 2 residues coordinate a divalent metal cation: Glu353 and Glu448.

It belongs to the peptidase M24A family. Methionine aminopeptidase eukaryotic type 2 subfamily. The cofactor is Co(2+). It depends on Zn(2+) as a cofactor. Mn(2+) serves as cofactor. Fe(2+) is required as a cofactor.

It localises to the cytoplasm. The catalysed reaction is Release of N-terminal amino acids, preferentially methionine, from peptides and arylamides.. Its function is as follows. Cotranslationally removes the N-terminal methionine from nascent proteins. The N-terminal methionine is often cleaved when the second residue in the primary sequence is small and uncharged (Met-Ala-, Cys, Gly, Pro, Ser, Thr, or Val). The chain is Methionine aminopeptidase 2-1 from Arthroderma gypseum (strain ATCC MYA-4604 / CBS 118893) (Microsporum gypseum).